Consider the following 1061-residue polypeptide: Ribonuclease 3 (1061 aa).

2 disordered regions span residues 1-20 and 149-244; these read MDFTEIHKRSRRKKFQQIHQ and PLHS…SYNE. A compositionally biased stretch (basic and acidic residues) spans 156–173; the sequence is KTPERKENEEDSDSEIRS. RNase III domains lie at 586 to 759 and 811 to 935; these read LSVF…LDSG and FHRL…VDKG. Residues Glu-851, Asp-921, and Glu-924 each contribute to the Mg(2+) site. Residues 962-1037 enclose the DRBM domain; that stretch reads DAKSHLQQWC…AENALAALEK (76 aa).

The protein belongs to the ribonuclease III family. It depends on Mg(2+) as a cofactor. Mn(2+) serves as cofactor.

The protein localises to the nucleus. It catalyses the reaction Endonucleolytic cleavage to 5'-phosphomonoester.. Executes the initial step of microRNA (miRNA) processing in the nucleus, that is the cleavage of pri-miRNA to release pre-miRNA. Involved in pre-rRNA processing. Cleaves double-strand RNA and does not cleave single-strand RNA. Involved in fertility. Required for the function or synthesis of the let-7 miRNA. The polypeptide is Ribonuclease 3 (Caenorhabditis briggsae).